A 195-amino-acid chain; its full sequence is Holliday junction branch migration complex subunit RuvA (195 aa).

The interval 1 to 66 is domain I; sequence MNYLIFKVIY…LIIKDLYGFR (66 aa). The tract at residues 67–141 is domain II; sequence TYNERLLFID…KYINKVNDKN (75 aa). Residue asparagine 141 is a region of interest, flexible linker. The interval 141–195 is domain III; sequence NNWAKELSIGLENLGYTKKDIEYAITKVKINSQQDIDISEIISSAIKEISLRHEN.

It belongs to the RuvA family. As to quaternary structure, homotetramer. Forms an RuvA(8)-RuvB(12)-Holliday junction (HJ) complex. HJ DNA is sandwiched between 2 RuvA tetramers; dsDNA enters through RuvA and exits via RuvB. An RuvB hexamer assembles on each DNA strand where it exits the tetramer. Each RuvB hexamer is contacted by two RuvA subunits (via domain III) on 2 adjacent RuvB subunits; this complex drives branch migration. In the full resolvosome a probable DNA-RuvA(4)-RuvB(12)-RuvC(2) complex forms which resolves the HJ.

The protein resides in the cytoplasm. In terms of biological role, the RuvA-RuvB-RuvC complex processes Holliday junction (HJ) DNA during genetic recombination and DNA repair, while the RuvA-RuvB complex plays an important role in the rescue of blocked DNA replication forks via replication fork reversal (RFR). RuvA specifically binds to HJ cruciform DNA, conferring on it an open structure. The RuvB hexamer acts as an ATP-dependent pump, pulling dsDNA into and through the RuvAB complex. HJ branch migration allows RuvC to scan DNA until it finds its consensus sequence, where it cleaves and resolves the cruciform DNA. This chain is Holliday junction branch migration complex subunit RuvA, found in Ureaplasma parvum serovar 3 (strain ATCC 27815 / 27 / NCTC 11736).